Reading from the N-terminus, the 73-residue chain is Photosystem I reaction center subunit IV (73 aa).

The protein belongs to the PsaE family.

The protein resides in the cellular thylakoid membrane. Stabilizes the interaction between PsaC and the PSI core, assists the docking of the ferredoxin to PSI and interacts with ferredoxin-NADP oxidoreductase. The chain is Photosystem I reaction center subunit IV from Synechococcus sp. (strain JA-3-3Ab) (Cyanobacteria bacterium Yellowstone A-Prime).